Here is a 321-residue protein sequence, read N- to C-terminus: Beta-1,3-N-acetylglucosaminyltransferase manic fringe (321 aa).

Residues 1–7 (MQCRLPR) lie on the Cytoplasmic side of the membrane. The chain crosses the membrane as a helical; Signal-anchor for type II membrane protein span at residues 8–27 (GLAGALLTLLCMGLLCLRYH). Residues 28 to 321 (LNLSPQRVQE…TPWCPQLGAR (294 aa)) are Lumenal-facing. Arg-70 provides a ligand contact to substrate. A glycan (N-linked (GlcNAc...) asparagine) is linked at Asn-109. 2 cysteine pairs are disulfide-bonded: Cys-110-Cys-121 and Cys-139-Cys-202. Asp-143 is a binding site for substrate. Asp-144 is a Mn(2+) binding site. Asn-185 is a glycosylation site (N-linked (GlcNAc...) asparagine). Asp-232 is an active-site residue. His-256 serves as a coordination point for Mn(2+). A disulfide bond links Cys-306 and Cys-315.

Belongs to the glycosyltransferase 31 family. The cofactor is Mn(2+).

It localises to the golgi apparatus membrane. The enzyme catalyses 3-O-(alpha-L-fucosyl)-L-threonyl-[EGF-like domain protein] + UDP-N-acetyl-alpha-D-glucosamine = 3-O-(N-acetyl-beta-D-glucosaminyl-(1-&gt;3)-alpha-L-fucosyl)-L-threonyl-[EGF-like domain protein] + UDP + H(+). It carries out the reaction 3-O-(alpha-L-fucosyl)-L-seryl-[EGF-like domain protein] + UDP-N-acetyl-alpha-D-glucosamine = 3-O-(N-acetyl-beta-D-glucosaminyl-(1-&gt;3)-alpha-L-fucosyl)-L-seryl-[EGF-like domain protein] + UDP + H(+). Its function is as follows. Glycosyltransferase that initiates the elongation of O-linked fucose residues attached to EGF-like repeats in the extracellular domain of Notch molecules. Modulates NOTCH1 activity by modifying O-fucose residues at specific EGF-like domains resulting in inhibition of NOTCH1 activation by JAG1 and enhancement of NOTCH1 activation by DLL1 via an increase in its binding to DLL1. The sequence is that of Beta-1,3-N-acetylglucosaminyltransferase manic fringe (MFNG) from Pan troglodytes (Chimpanzee).